A 378-amino-acid polypeptide reads, in one-letter code: Stimulator of interferon genes protein (378 aa).

Topologically, residues 1–17 (MPYSSLHPSIPQPRGLR) are cytoplasmic. Residues 1–190 (MPYSSLHPSI…AYNQRHKNVL (190 aa)) form a mediates interaction with ZDHHC1 and ZDHHC11 region. The helical transmembrane segment at 18–34 (AQVAALVLLGACLVALW) threads the bilayer. The Lumenal portion of the chain corresponds to 35-44 (GLGELPEYTL). A helical membrane pass occupies residues 45–69 (RWLVLHLASQQIGLLVKGLCSLAEE). The Cytoplasmic segment spans residues 70–91 (LCHVHSRYQSSYWRAARACLGC). 2 S-palmitoyl cysteine lipidation sites follow: Cys88 and Cys91. Residues 92 to 106 (PIRCGALLLLSCYFY) traverse the membrane as a helical segment. The Lumenal portion of the chain corresponds to 107 to 116 (FSIRDKAGLP). A helical transmembrane segment spans residues 117–134 (LPWMLALLGLSQALNILL). Over 135-378 (GLQHLAPAEV…QPLPLRSDIF (244 aa)) the chain is Cytoplasmic. Residue Lys150 forms a Glycyl lysine isopeptide (Lys-Gly) (interchain with G-Cter in ubiquitin) linkage. Residues 153–339 (FNVAHGLAWS…LRHLRQEERE (187 aa)) are cyclic dinucleotide-binding domain (CBD). 2 residues coordinate 2',3'-cGAMP: Ser162 and Tyr167. The 3',3'-c-di-GMP site is built by Ser162 and Tyr167. 2',3'-cUAMP is bound at residue Tyr167. A Glycyl lysine isopeptide (Lys-Gly) (interchain with G-Cter in ubiquitin) cross-link involves residue Lys236. 2 residues coordinate 2',3'-cGAMP: Arg238 and Thr263. 2',3'-cUAMP is bound by residues Arg238 and Thr263. 3',3'-c-di-GMP contacts are provided by residues 238 to 241 (RVYT) and Thr263. The C-terminal tail (CTT) stretch occupies residues 339-378 (EVTMGSAETSVVPTSSTLSQEPELLISGMEQPLPLRSDIF). Ser354 carries the phosphoserine modification. Thr355 is modified (phosphothreonine). Phosphoserine; by TBK1 is present on residues Ser357 and Ser365. Positions 362–365 (LLIS) match the pLxIS motif motif.

The protein belongs to the STING family. In terms of assembly, homodimer; forms a homodimer in absence of cyclic nucleotide (c-di-GMP or cGAMP); 'Lys-63'-linked ubiquitination at Lys-150 is required for homodimerization. Homotetramer; in presence of cyclic nucleotide (c-di-GMP or cGAMP), forms tetramers and higher-order oligomers through side-by-side packing. Interacts (when phosphorylated) with IRF3; following activation and phosphorylation on the pLxIS motif by TBK1, recruits IRF3. Interacts with DDX58/RIG-I, MAVS and SSR2. Interacts with RNF5 and TRIM56. Interacts with TBK1; when homodimer, leading to subsequent production of IFN-beta. Interacts with IFIT1 and IFIT2. Interacts with TRIM29; this interaction induces STING1 ubiquitination and subsequent degradation. Associates with the MHC-II complex. Interacts with STEEP1; interaction takes place upon cGAMP-activation and STING1 phosphorylation by MAP3K7/TAK1 and promotes STING1 translocation to COPII vesicles. Interacts with SEC24A, SEC24B and SEC24C; promoting translocation to COPII vesicles. Interacts (when ubiquitinated) with SQSTM1; leading to relocalization to autophagosomes. Interacts with SURF4. Interacts with HNRNPA2B1. Interacts with ZDHHC1; ZDHHC1 constitutively interacts with STING1 and in presence of DNA viruses activates it by promoting its cGAMP-induced oligomerization and the recruitment of downstream signaling components. Interacts with ZDHHC11; in presence of DNA viruses promotes the recruitment of IRF3 to STING1. Interacts with TOMM70. Interacts with TAB1; promoting recruitment of TAB1 to the endoplasmic reticulum membrane and subsequent activation of MAP3K7/TAK1. Interacts (via transmembrane domain) with TMEM203. Interacts with DDX41. As to quaternary structure, (Microbial infection) Interacts with African swine fever virus/ASFV protein A528R; this interaction mediates STING1 degradation. (Microbial infection) Interacts with African swine fever virus/ASFV minor capsid protein p17. In terms of assembly, (Microbial infection) Interacts with Pseudorabies virus protein UL13; this interaction mediates STING1 degradation in a RNF5-dependent manner. Post-translationally, phosphorylation by TBK1 leads to activation and production of IFN-beta. Following cyclic nucleotide (c-di-GMP or cGAMP)-binding, activation and translocation from the endoplasmic reticulum, STING1 is phosphorylated by TBK1 at Ser-365 in the pLxIS motif. The phosphorylated pLxIS motif constitutes an IRF3-binding motif, leading to recruitment of the transcription factor IRF3 to induce type-I interferons and other cytokines. Phosphorylated on tyrosine residues upon MHC-II aggregation. Dephosphorylation by PPP6C leads to inactivation and decreased production of IFN-beta. Phosphorylation at Ser-357 is also required to activate IRF3. Phosphorylation at Ser-354 by MAP3K7/TAK1 facilitates its interaction with STEEP1, promoting STING1 translocation to COPII vesicles. In terms of processing, ubiquitinated. Ubiquitinated via 'Lys-63'-linked ubiquitin chains in response to double-stranded DNA treatment, leading to relocalization to autophagosomes and subsequent degradation; this process is dependent on SQSTM1. 'Lys-63'-linked ubiquitination mediated by TRIM56 at Lys-150 promotes homodimerization and recruitment of the antiviral kinase TBK1 and subsequent production of IFN-beta. 'Lys-48'-linked polyubiquitination at Lys-150 occurring after viral infection is mediated by RNF5 and leads to proteasomal degradation. 'Lys-11'-linked polyubiquitination at Lys-150 by RNF26 leads to stabilize STING1: it protects STING1 from RNF5-mediated 'Lys-48'-linked polyubiquitination. 'Lys-33'-linked and 'Lys-48'-linked deubiquitinated by USP20; leading to its stabilization and promotion of innate antiviral response. 'Lys-48'-linked deubiquitinated by USP44; leading to its stabilization and promotion of innate antiviral response. Deubiquitinated by USP13; leading to inhibition of innate antiviral response. 'Lys-63'-linked deubiquitinated by USP49; leading to inhibition of the subsequent recruitment of TBK1 to the signaling complex. 'Lys-63'-linked ubiquitination mediated by RNF39 promotes the activation of the cGAS-STING pathway. Palmitoylation takes place in the Golgi apparatus and creates a platform for the recruitment of TBK1. In terms of tissue distribution, expressed at higher level in the spleen, lymph node, lung and bone marrow, followed by the small intestine, heart, liver and brain, and to a lesser extent in the stomach and kidney.

The protein resides in the endoplasmic reticulum membrane. It is found in the cytoplasm. Its subcellular location is the perinuclear region. The protein localises to the endoplasmic reticulum-Golgi intermediate compartment membrane. It localises to the golgi apparatus membrane. The protein resides in the cytoplasmic vesicle. It is found in the autophagosome membrane. Its subcellular location is the mitochondrion outer membrane. The protein localises to the cell membrane. It catalyses the reaction H(+)(in) = H(+)(out). Facilitator of innate immune signaling that acts as a sensor of cytosolic DNA from bacteria and viruses and promotes the production of type I interferon (IFN-alpha and IFN-beta). Innate immune response is triggered in response to non-CpG double-stranded DNA from viruses and bacteria delivered to the cytoplasm. Acts by binding cyclic dinucleotides: recognizes and binds cyclic di-GMP (c-di-GMP), a second messenger produced by bacteria, cyclic UMP-AMP (2',3'-cUAMP), and cyclic GMP-AMP (cGAMP), a messenger produced by CGAS in response to DNA virus in the cytosol. Upon binding to c-di-GMP, cUAMP or cGAMP, STING1 oligomerizes, translocates from the endoplasmic reticulum and is phosphorylated by TBK1 on the pLxIS motif, leading to recruitment and subsequent activation of the transcription factor IRF3 to induce expression of type I interferon and exert a potent anti-viral state. Exhibits 2',3' phosphodiester linkage-specific ligand recognition: can bind both 2'-3' linked cGAMP (2'-3'-cGAMP) and 3'-3' linked cGAMP but is preferentially activated by 2'-3' linked cGAMP. The preference for 2'-3'-cGAMP, compared to other linkage isomers is probably due to the ligand itself, whichs adopts an organized free-ligand conformation that resembles the STING1-bound conformation and pays low energy costs in changing into the active conformation. In addition to promote the production of type I interferons, plays a direct role in autophagy. Following cGAMP-binding, STING1 buds from the endoplasmic reticulum into COPII vesicles, which then form the endoplasmic reticulum-Golgi intermediate compartment (ERGIC). The ERGIC serves as the membrane source for WIPI2 recruitment and LC3 lipidation, leading to formation of autophagosomes that target cytosolic DNA or DNA viruses for degradation by the lysosome. Promotes autophagy by acting as a proton channel that directs proton efflux from the Golgi to facilitate MAP1LC3B/LC3B lipidation. The autophagy- and interferon-inducing activities can be uncoupled and autophagy induction is independent of TBK1 phosphorylation. Autophagy is also triggered upon infection by bacteria: following c-di-GMP-binding, which is produced by live Gram-positive bacteria, promotes reticulophagy. May be involved in translocon function, the translocon possibly being able to influence the induction of type I interferons. May be involved in transduction of apoptotic signals via its association with the major histocompatibility complex class II (MHC-II). The protein is Stimulator of interferon genes protein of Sus scrofa (Pig).